Consider the following 180-residue polypeptide: ADP-ribosylation factor 4 (180 aa).

Glycine 2 carries N-myristoyl glycine lipidation. GTP-binding positions include 24-31 (GLDAAGKT), 67-71 (DVGGQ), and 126-129 (NKQD). At serine 147 the chain carries Phosphoserine.

It belongs to the small GTPase superfamily. Arf family. Forms a complex containing RAB11A, ASAP1, RAB3IP, RAP11FIP3 and ARF4; the complex promotes preciliary trafficking; the complex binds to RHO in photoreceptor cells and promotes RHO ciliary transport.

Its subcellular location is the golgi apparatus. The protein localises to the membrane. Its function is as follows. GTP-binding protein that functions as an allosteric activator of the cholera toxin catalytic subunit, an ADP-ribosyltransferase. Involved in protein trafficking; may modulate vesicle budding and uncoating within the Golgi apparatus. Part of the ciliary targeting complex containing Rab11, ASAP1, Rabin8/RAB3IP, RAB11FIP3 and ARF4, which direct preciliary vesicle trafficking to mother centriole and ciliogenesis initiation. The protein is ADP-ribosylation factor 4 (ARF4) of Homo sapiens (Human).